Reading from the N-terminus, the 468-residue chain is Pentatricopeptide repeat-containing protein At5g46680 (468 aa).

PPR repeat units lie at residues 12–46, 47–81, 82–116, 117–152, 153–183, 187–221, 222–256, 257–291, 293–327, 328–362, 363–393, and 394–428; these read STKLLNISVNSLCKFRNLERAETLLIDGIRLGVLP, DVITYNTLIKGYTRFIGIDEAYAVTRRMREAGIEP, DVTTYNSLISGAAKNLMLNRVLQLFDEMLHSGLSP, DMWSYNTLMSCYFKLGRHGEAFKILHEDIHLAGLVP, GIDTYNILLDALCKSGHTDNAIELFKHLKSR, ELMTYNILINGLCKSRRVGSVDWMMRELKKSGYTP, NAVTYTTMLKMYFKTKRIEKGLQLFLKMKKEGYTF, DGFANCAVVSALIKTGRAEEAYECMHELVRSGTRS, DIVSYNTLLNLYFKDGNLDAVDDLLEEIEMKGLKP, DDYTHTIIVNGLLNIGNTGGAEKHLACIGEMGMQP, SVVTCNCLIDGLCKAGHVDRAMRLFASMEVR, and DEFTYTSVVHNLCKDGRLVCASKLLLSCYNKGMKI.

Belongs to the PPR family. P subfamily.

This is Pentatricopeptide repeat-containing protein At5g46680 from Arabidopsis thaliana (Mouse-ear cress).